The chain runs to 177 residues: Putative zinc finger protein 826 (177 aa).

The C2H2-type 1; degenerate zinc finger occupies 99 to 114 (KTFTWSSSPHKHRRTH). Residues 120 to 142 (YKCEECGKAFTASSTLSEYKTIH) form a C2H2-type 2; degenerate zinc finger. The C2H2-type 3 zinc-finger motif lies at 148–170 (CKCEECGKAFNWSSDFNKHKRIH).

It localises to the nucleus. Its function is as follows. May be involved in transcriptional regulation. This is Putative zinc finger protein 826 (ZNF826P) from Homo sapiens (Human).